The following is a 222-amino-acid chain: GEM-like protein 4 (222 aa).

The region spanning K95–Q173 is the GRAM domain.

The protein belongs to the GEM family.

The protein is GEM-like protein 4 of Arabidopsis thaliana (Mouse-ear cress).